The following is a 134-amino-acid chain: MSWQAYVDDHLMCDIEGHEGHRLTAAAIVGHDGSVWAQSATFPQFKPEEMNGIMTDFNEPGHMAPTGLHLGGAKYMVIQGEAGAVIRGKKGSGGITIKKTGQALVFGIYEEPVTPGQCNMVVERLGDYLDEQGL.

A disulfide bond links Cys13 and Cys118. Positions 84-100 (AVIRGKKGSGGITIKKT) match the Involved in PIP2 interaction motif. The residue at position 114 (Thr114) is a Phosphothreonine.

It belongs to the profilin family. Occurs in many kinds of cells as a complex with monomeric actin in a 1:1 ratio. Phosphorylated by MAP kinases.

It is found in the cytoplasm. The protein localises to the cytoskeleton. In terms of biological role, binds to actin and affects the structure of the cytoskeleton. At high concentrations, profilin prevents the polymerization of actin, whereas it enhances it at low concentrations. The polypeptide is Profilin-3 (Olea europaea (Common olive)).